A 653-amino-acid chain; its full sequence is Sodium-dependent phosphate transporter 2 (653 aa).

Over Met-1–Glu-5 the chain is Extracellular. Residues Tyr-6–Ala-26 traverse the membrane as a helical segment. Residues Asn-27 to Gln-46 are Cytoplasmic-facing. The helical transmembrane segment at Ala-47–Gly-67 threads the bilayer. Residues Glu-68–Leu-86 are Extracellular-facing. Asn-81 is a glycosylation site (N-linked (GlcNAc...) asparagine). Residues Leu-87–Phe-107 form a helical membrane-spanning segment. At Leu-108–Lys-109 the chain is on the cytoplasmic side. Residues Leu-110–Val-130 traverse the membrane as a helical segment. Residues Gly-131 to Lys-142 lie on the Extracellular side of the membrane. Residues Ile-143–Leu-163 traverse the membrane as a helical segment. At Met-164–Tyr-187 the chain is on the cytoplasmic side. The chain crosses the membrane as a helical span at residues Ala-188 to Leu-208. The Extracellular portion of the chain corresponds to Gln-209–Ala-217. A helical membrane pass occupies residues Leu-218–Trp-238. Residues Met-239 to Gln-483 lie on the Cytoplasmic side of the membrane. The interval Leu-275 to Pro-310 is disordered. The span at Ser-290–Ser-303 shows a compositional bias: low complexity. A helical transmembrane segment spans residues Val-484–Gly-504. The Extracellular segment spans residues Gly-505 to Ser-532. Residues Thr-533–Gly-553 traverse the membrane as a helical segment. Topologically, residues Arg-554 to Gly-572 are cytoplasmic. Residues Phe-573–Ser-587 traverse the membrane as a helical segment. Residues Asn-588 to Ser-594 are Extracellular-facing. A helical transmembrane segment spans residues Thr-595 to Arg-610. The Cytoplasmic segment spans residues Ser-611–Asn-622. A helical membrane pass occupies residues Ile-623 to Ala-643. Topologically, residues Ile-644–Val-653 are extracellular.

This sequence belongs to the inorganic phosphate transporter (PiT) (TC 2.A.20) family. In terms of assembly, homodimer.

Its subcellular location is the cell membrane. The protein resides in the apical cell membrane. It catalyses the reaction 2 Na(+)(out) + phosphate(out) = 2 Na(+)(in) + phosphate(in). In terms of biological role, sodium-phosphate symporter which preferentially transports the monovalent form of phosphate with a stoichiometry of two sodium ions per phosphate ion. The protein is Sodium-dependent phosphate transporter 2 (slc20a2) of Xenopus laevis (African clawed frog).